The chain runs to 438 residues: Zinc finger protein 641 (438 aa).

The tract at residues 1-53 is disordered; sequence MQAEDRSQFGSAAEMLSEQTAALGTGWESMNVQLDGAEPQVERGSQEERPWRT. Positions 17 to 32 are enriched in polar residues; the sequence is SEQTAALGTGWESMNV. The segment covering 40-51 has biased composition (basic and acidic residues); it reads QVERGSQEERPW. The 73-residue stretch at 109 to 181 folds into the KRAB domain; the sequence is VTIKDVSLCF…DPQDLEERDI (73 aa). Positions 171–265 are transactivation; that stretch reads PDPQDLEERD…EMDSLLRPHT (95 aa). A Phosphoserine modification is found at Ser191. 3 C2H2-type zinc fingers span residues 264-286, 292-314, and 320-342; these read HTCP…QQTH, YSCL…QKTH, and SRCS…QRVH. The segment at 345–367 is disordered; sequence GKSCKGQEVGESPGTRKRQRAPP. C2H2-type zinc fingers lie at residues 372–394 and 400–422; these read HVCT…WLTH and FQCP…LLTH. Positions 418-438 are disordered; that stretch reads HLLTHQGQSPRNSWDRGTSVF. Residues 422 to 438 are compositionally biased toward polar residues; sequence HQGQSPRNSWDRGTSVF. Ser426 is modified (phosphoserine).

This sequence belongs to the krueppel C2H2-type zinc-finger protein family. As to expression, highly expressed in skeletal muscle, moderate expression in heart, liver, and pancreas, lower expression in placenta, no expression seen in brain, lung, and kidney.

The protein localises to the nucleus. Transcriptional activator. Activates transcriptional activities of SRE and AP-1. The protein is Zinc finger protein 641 (ZNF641) of Homo sapiens (Human).